Here is a 261-residue protein sequence, read N- to C-terminus: tRNA 5-carboxymethoxyuridine methyltransferase (261 aa).

S-adenosyl-L-methionine contacts are provided by residues R26, 52–53, D73, 102–103, and H119; these read GG and AQ.

Belongs to the class I-like SAM-binding methyltransferase superfamily. CmoM family.

The enzyme catalyses 5-carboxymethoxyuridine(34) in tRNA + S-adenosyl-L-methionine = 5-methoxycarbonylmethoxyuridine(34) in tRNA + S-adenosyl-L-homocysteine. Catalyzes the methylation of 5-carboxymethoxyuridine (cmo5U) to form 5-methoxycarbonylmethoxyuridine (mcmo5U) at position 34 in tRNAs. Four tRNAs (tRNA(Ala1), tRNA(Ser1), tRNA(Pro3) and tRNA(Thr4)) are fully modified with mcmo5U in stationary-phase E.coli. Also present at low frequency in tRNA(Leu3) and tRNA(Val1). This Escherichia coli (strain K12) protein is tRNA 5-carboxymethoxyuridine methyltransferase.